The primary structure comprises 163 residues: Large ribosomal subunit protein uL10 (163 aa).

This sequence belongs to the universal ribosomal protein uL10 family. Part of the ribosomal stalk of the 50S ribosomal subunit. The N-terminus interacts with L11 and the large rRNA to form the base of the stalk. The C-terminus forms an elongated spine to which L12 dimers bind in a sequential fashion forming a multimeric L10(L12)X complex.

Functionally, forms part of the ribosomal stalk, playing a central role in the interaction of the ribosome with GTP-bound translation factors. The polypeptide is Large ribosomal subunit protein uL10 (rplJ) (Pasteurella multocida (strain Pm70)).